The chain runs to 236 residues: Purine nucleoside phosphorylase DeoD-type (236 aa).

His5 is a binding site for a purine D-ribonucleoside. Phosphate contacts are provided by residues Gly21, Arg25, Arg44, and 88-91 (RVGT). Residues 180 to 182 (EME) and 204 to 205 (SD) each bind a purine D-ribonucleoside. The Proton donor role is filled by Asp205.

It belongs to the PNP/UDP phosphorylase family. In terms of assembly, homohexamer; trimer of homodimers.

It catalyses the reaction a purine D-ribonucleoside + phosphate = a purine nucleobase + alpha-D-ribose 1-phosphate. It carries out the reaction a purine 2'-deoxy-D-ribonucleoside + phosphate = a purine nucleobase + 2-deoxy-alpha-D-ribose 1-phosphate. In terms of biological role, catalyzes the reversible phosphorolytic breakdown of the N-glycosidic bond in the beta-(deoxy)ribonucleoside molecules, with the formation of the corresponding free purine bases and pentose-1-phosphate. The protein is Purine nucleoside phosphorylase DeoD-type of Shewanella baltica (strain OS223).